An 843-amino-acid polypeptide reads, in one-letter code: NADH-quinone oxidoreductase subunit G (843 aa).

Residues 20 to 98 (DLVTLTIDGA…GMVVKTQLTS (79 aa)) form the 2Fe-2S ferredoxin-type domain. The [2Fe-2S] cluster site is built by Cys54, Cys65, Cys68, and Cys82. Residues 100–139 (VAEKAQHGVMELLLINHPLDCPVCDKGGECPLQNQAMSHG) form the 4Fe-4S His(Cys)3-ligated-type domain. Residues His116, Cys120, Cys123, Cys129, Cys169, Cys172, Cys175, Cys219, Cys245, Cys248, Cys252, and Cys280 each contribute to the [4Fe-4S] cluster site. The 4Fe-4S Mo/W bis-MGD-type domain occupies 238–294 (LISSPSVCEHCSGGCATRTDHRRGKVMRRLAANEPEVNEEWICDKGRFGFRYAQQRD).

Belongs to the complex I 75 kDa subunit family. The cofactor is [2Fe-2S] cluster. [4Fe-4S] cluster is required as a cofactor.

The catalysed reaction is a quinone + NADH + 5 H(+)(in) = a quinol + NAD(+) + 4 H(+)(out). NDH-1 shuttles electrons from NADH, via FMN and iron-sulfur (Fe-S) centers, to quinones in the respiratory chain. Couples the redox reaction to proton translocation (for every two electrons transferred, four hydrogen ions are translocated across the cytoplasmic membrane), and thus conserves the redox energy in a proton gradient. The protein is NADH-quinone oxidoreductase subunit G (nuoG) of Streptomyces coelicolor (strain ATCC BAA-471 / A3(2) / M145).